Consider the following 717-residue polypeptide: Ubinuclein-2 (717 aa).

Disordered regions lie at residues 114–136 (KDGSDGEELDGAPDDDDYDTEDS), 166–308 (LERI…SAKS), and 620–717 (ADSS…NLPS). The span at 118 to 136 (DGEELDGAPDDDDYDTEDS) shows a compositional bias: acidic residues. 2 stretches are compositionally biased toward polar residues: residues 214-246 (QSASPGPSSKKISNDSKTVQDSFSPLKAQNGND) and 285-308 (SSKSVHEQSNSPPGKSRPNVSAKS). Basic and acidic residues predominate over residues 623–632 (SFERSKQQHE). The Nuclear localization signal signature appears at 634-641 (LKRTSSLS). Over residues 653-665 (KTEPALEETHLPA) the composition is skewed to basic and acidic residues. Basic residues predominate over residues 675–705 (RQTHLKSKTHKQVQVHPQSKAHKQAQVHPKA). The segment covering 706 to 717 (KTQTPPDLNLPS) has biased composition (polar residues).

The protein belongs to the ubinuclein family. As to quaternary structure, component of the HIRA complex made of UBN1, UBN2, ASF1A, CABIN1 and HIRA. Interacts with HIRA.

The protein localises to the nucleus. It is found in the nucleolus. Its function is as follows. May be required for replication-independent chromatin assembly. The protein is Ubinuclein-2 of Arabidopsis thaliana (Mouse-ear cress).